The primary structure comprises 799 residues: Histidine biosynthesis trifunctional protein (799 aa).

A phosphoribosyl-AMP cyclohydrolase region spans residues 1 to 229 (MVLPILPLID…FIVEQENVGF (229 aa)). Positions 230–312 (CHLETMSCFG…FYFALAKLVT (83 aa)) are phosphoribosyl-ATP pyrophosphohydrolase. The segment at 313 to 799 (NNVSLKDVEN…KLGLIPKDFQ (487 aa)) is histidinol dehydrogenase. Gln-618 and His-621 together coordinate Zn(2+). Catalysis depends on residues Glu-687 and His-688. Asp-721 and His-780 together coordinate Zn(2+).

This sequence in the C-terminal section; belongs to the histidinol dehydrogenase family. Zn(2+) serves as cofactor.

The catalysed reaction is 1-(5-phospho-beta-D-ribosyl)-5'-AMP + H2O = 1-(5-phospho-beta-D-ribosyl)-5-[(5-phospho-beta-D-ribosylamino)methylideneamino]imidazole-4-carboxamide. It carries out the reaction 1-(5-phospho-beta-D-ribosyl)-ATP + H2O = 1-(5-phospho-beta-D-ribosyl)-5'-AMP + diphosphate + H(+). The enzyme catalyses L-histidinol + 2 NAD(+) + H2O = L-histidine + 2 NADH + 3 H(+). The protein operates within amino-acid biosynthesis; L-histidine biosynthesis; L-histidine from 5-phospho-alpha-D-ribose 1-diphosphate: step 2/9. It participates in amino-acid biosynthesis; L-histidine biosynthesis; L-histidine from 5-phospho-alpha-D-ribose 1-diphosphate: step 3/9. Its pathway is amino-acid biosynthesis; L-histidine biosynthesis; L-histidine from 5-phospho-alpha-D-ribose 1-diphosphate: step 9/9. The chain is Histidine biosynthesis trifunctional protein (HIS4) from Saccharomyces bayanus (Yeast).